Reading from the N-terminus, the 356-residue chain is MDANVLIMAGGTGGHVFPALACAREFQARGYKVHWLGTPRGIENELIPQAGLPLHLINVTGLRGKGRLSLLKAPFMLLKALMQARKVVRQVKPVCVVGFGGYVTGPGGLAARLAGVPLIIHEQNAVAGTANRSLASFASRVCEAFPNTFAASAKRRTTGNPVRVELFLETPRQALAGRKARLLVLGGSLGAEPLNKLLPDALAQLPQDIQPEVFHQSGKNHDAVTAERYRNVGVEAQVAPFIQNMAQAYSWADLVVCRAGALTISELAAAGLPSLLIPLPHAIDDHQSRNADYLAREGAAFVMPQATTGAAEMAARLKEVLMQPEQLNSMARTARSLAKPDATNTVVNVCVEVAHG.

UDP-N-acetyl-alpha-D-glucosamine-binding positions include 12 to 14 (TGG), asparagine 124, arginine 163, serine 188, isoleucine 242, and glutamine 287.

It belongs to the glycosyltransferase 28 family. MurG subfamily.

It is found in the cell inner membrane. The enzyme catalyses di-trans,octa-cis-undecaprenyl diphospho-N-acetyl-alpha-D-muramoyl-L-alanyl-D-glutamyl-meso-2,6-diaminopimeloyl-D-alanyl-D-alanine + UDP-N-acetyl-alpha-D-glucosamine = di-trans,octa-cis-undecaprenyl diphospho-[N-acetyl-alpha-D-glucosaminyl-(1-&gt;4)]-N-acetyl-alpha-D-muramoyl-L-alanyl-D-glutamyl-meso-2,6-diaminopimeloyl-D-alanyl-D-alanine + UDP + H(+). The protein operates within cell wall biogenesis; peptidoglycan biosynthesis. Its function is as follows. Cell wall formation. Catalyzes the transfer of a GlcNAc subunit on undecaprenyl-pyrophosphoryl-MurNAc-pentapeptide (lipid intermediate I) to form undecaprenyl-pyrophosphoryl-MurNAc-(pentapeptide)GlcNAc (lipid intermediate II). The chain is UDP-N-acetylglucosamine--N-acetylmuramyl-(pentapeptide) pyrophosphoryl-undecaprenol N-acetylglucosamine transferase from Pseudomonas syringae pv. tomato (strain ATCC BAA-871 / DC3000).